Reading from the N-terminus, the 361-residue chain is uncharacterized protein (361 aa).

Thr-12 is modified (phosphothreonine).

It is found in the cytoplasm. It localises to the nucleus. This is an uncharacterized protein from Schizosaccharomyces pombe (strain 972 / ATCC 24843) (Fission yeast).